Consider the following 353-residue polypeptide: Hydrazine synthase subunit gamma (353 aa).

Positions 1–39 are cleaved as a signal peptide; it reads MAREMRLGGKERMKTGVVKIGLVAALGVVGLISAGGVYA. Residues C102, C105, and H106 each coordinate heme c. D118, L119, E122, G123, S126, N129, L139, and P141 together coordinate Ca(2+). Positions 165, 225, 228, and 229 each coordinate heme c. Positions 209-353 constitute a Cytochrome c domain; sequence EAQKRGQKIF…QDLVEYLKAL (145 aa). 4 residues coordinate Ca(2+): D296, S306, G307, and T308. A heme c-binding site is contributed by H332.

In terms of assembly, part of the hydrazine synthase complex that forms an elongated dimer of heterotrimers composed of one alpha, one beta and one gamma subunit. Heme c is required as a cofactor.

The protein resides in the anammoxosome. The enzyme catalyses hydrazine + 3 Fe(III)-[cytochrome c] + H2O = nitric oxide + 3 Fe(II)-[cytochrome c] + NH4(+) + 2 H(+). It participates in nitrogen metabolism. In terms of biological role, component of the hydrazine synthase complex that catalyzes the condensation of nitric oxide (NO) with ammonium to form hydrazine. The gamma subunit catalyzes the first half-reaction, i.e. the three-electron reduction of nitric oxide to hydroxylamine; it may obtain electrons from the triheme cytochrome c kuste2854. Is involved in anaerobic ammonium oxidation (anammox), a biological process in which nitrite is used as the electron acceptor in the conversion of ammonium to dinitrogen gas (N2) and water; this bacterial process has a major role in the Earth's nitrogen cycle and has been estimated to synthesize up to 50% of the dinitrogen gas emitted into our atmosphere from the oceans. This chain is Hydrazine synthase subunit gamma, found in Kuenenia stuttgartiensis.